A 307-amino-acid polypeptide reads, in one-letter code: UDP-3-O-acyl-N-acetylglucosamine deacetylase (307 aa).

Zn(2+) is bound by residues His78, His241, and Asp245. Residue His268 is the Proton donor of the active site.

Belongs to the LpxC family. The cofactor is Zn(2+).

It catalyses the reaction a UDP-3-O-[(3R)-3-hydroxyacyl]-N-acetyl-alpha-D-glucosamine + H2O = a UDP-3-O-[(3R)-3-hydroxyacyl]-alpha-D-glucosamine + acetate. Its pathway is glycolipid biosynthesis; lipid IV(A) biosynthesis; lipid IV(A) from (3R)-3-hydroxytetradecanoyl-[acyl-carrier-protein] and UDP-N-acetyl-alpha-D-glucosamine: step 2/6. Catalyzes the hydrolysis of UDP-3-O-myristoyl-N-acetylglucosamine to form UDP-3-O-myristoylglucosamine and acetate, the committed step in lipid A biosynthesis. The polypeptide is UDP-3-O-acyl-N-acetylglucosamine deacetylase (Delftia acidovorans (strain DSM 14801 / SPH-1)).